A 198-amino-acid chain; its full sequence is ATP-dependent Clp protease proteolytic subunit (198 aa).

Ser-98 acts as the Nucleophile in catalysis. His-123 is an active-site residue.

It belongs to the peptidase S14 family. Fourteen ClpP subunits assemble into 2 heptameric rings which stack back to back to give a disk-like structure with a central cavity, resembling the structure of eukaryotic proteasomes.

The protein localises to the cytoplasm. The catalysed reaction is Hydrolysis of proteins to small peptides in the presence of ATP and magnesium. alpha-casein is the usual test substrate. In the absence of ATP, only oligopeptides shorter than five residues are hydrolyzed (such as succinyl-Leu-Tyr-|-NHMec, and Leu-Tyr-Leu-|-Tyr-Trp, in which cleavage of the -Tyr-|-Leu- and -Tyr-|-Trp bonds also occurs).. In terms of biological role, cleaves peptides in various proteins in a process that requires ATP hydrolysis. Has a chymotrypsin-like activity. Plays a major role in the degradation of misfolded proteins. In Ehrlichia ruminantium (strain Gardel), this protein is ATP-dependent Clp protease proteolytic subunit.